A 548-amino-acid polypeptide reads, in one-letter code: Glucose-6-phosphate isomerase (548 aa).

The active-site Proton donor is the glutamate 353. Active-site residues include histidine 384 and lysine 512.

It belongs to the GPI family.

It is found in the cytoplasm. The enzyme catalyses alpha-D-glucose 6-phosphate = beta-D-fructose 6-phosphate. The protein operates within carbohydrate biosynthesis; gluconeogenesis. Its pathway is carbohydrate degradation; glycolysis; D-glyceraldehyde 3-phosphate and glycerone phosphate from D-glucose: step 2/4. Catalyzes the reversible isomerization of glucose-6-phosphate to fructose-6-phosphate. The polypeptide is Glucose-6-phosphate isomerase (Pseudoalteromonas translucida (strain TAC 125)).